The sequence spans 406 residues: MATPSNLGSSVLASKTKTKKKHFVAQKVKLFRASDPLLSVLMWGVNHSINELSHVQIPVMLMPDDFKAYSKIKVDNHLFNKENMPSHFKFKEYCPMVFRNLRERFGIDDQDFQNSLTRSAPLPNDSQARSGARFHTSYDKRYVIKTITSEDVAEMHNILKKYHQYIVECHGVTLLPQFLGMYRLNVDGVEIYVIVTRNVFSHRLSVYRKYDLKGSTVAREASDKEKAKELPTLKDNDFINEGQKIYIDDSNKKIFLEKLKKDVEFLAQLKLMDYSLLVGIHDVERAEQEEVECEENEGEEEGESDGAHPIGTPPDSPGNTLNSSPPLAPGEFDPNIDVYAIKCHENAPRKEVYFMAIIDILTHYDAKKKAAHAAKTVKHGAGAEISTVNPEQYSKRFLDFIGHILT.

Ala2 is modified (N-acetylalanine). Thr3 is modified (phosphothreonine). A Phosphoserine modification is found at Ser14. The 373-residue stretch at 33–405 (ASDPLLSVLM…RFLDFIGHIL (373 aa)) folds into the PIPK domain. Residues 59-65 (VMLMPDD) form a required for interaction with PIP5K1A region. Residues Lys89 and Lys145 each carry the N6-acetyllysine modification. A disordered region spans residues 287–328 (EQEEVECEENEGEEEGESDGAHPIGTPPDSPGNTLNSSPPLA). Acidic residues predominate over residues 289-304 (EEVECEENEGEEEGES).

As to quaternary structure, homodimer. Interacts with PIP4K2B; the interaction may regulate localization to the nucleus. Probably interacts with PIP5K1A; the interaction inhibits PIP5K1A kinase activity. Phosphorylated in tyrosines. Phosphorylation is induced by light and increases kinase activity.

Its subcellular location is the cell membrane. The protein resides in the nucleus. It localises to the lysosome. It is found in the cytoplasm. The protein localises to the photoreceptor inner segment. Its subcellular location is the cell projection. The protein resides in the cilium. It localises to the photoreceptor outer segment. The enzyme catalyses a 1,2-diacyl-sn-glycero-3-phospho-(1D-myo-inositol-5-phosphate) + ATP = a 1,2-diacyl-sn-glycero-3-phospho-(1D-myo-inositol-4,5-bisphosphate) + ADP + H(+). The catalysed reaction is 1,2-dihexadecanoyl-sn-glycero-3-phospho-(1D-myo-inositol-5-phosphate) + ATP = 1,2-dihexadecanoyl-sn-glycero-3-phospho-(1D-myo-inositol-4,5-bisphosphate) + ADP + H(+). It catalyses the reaction 1,2-dihexadecanoyl-sn-glycero-3-phospho-(1D-myo-inositol-5-phosphate) + GTP = 1,2-dihexadecanoyl-sn-glycero-3-phospho-(1D-myo-inositol-4,5-bisphosphate) + GDP + H(+). In rod outer segments, activated by light. Catalyzes the phosphorylation of phosphatidylinositol 5-phosphate (PtdIns5P) on the fourth hydroxyl of the myo-inositol ring, to form phosphatidylinositol 4,5-bisphosphate (PtdIns(4,5)P2). Has both ATP- and GTP-dependent kinase activities. May exert its function by regulating the levels of PtdIns5P, which functions in the cytosol by increasing AKT activity and in the nucleus signals through ING2. May regulate the pool of cytosolic PtdIns5P in response to the activation of tyrosine phosphorylation. Required for lysosome-peroxisome membrane contacts and intracellular cholesterol transport through modulating peroxisomal PtdIns(4,5)P2 level. In collaboration with PIP4K2B, has a role in mediating autophagy in times of nutrient stress. Required for autophagosome-lysosome fusion and the regulation of cellular lipid metabolism. Negatively regulates insulin signaling through a catalytic-independent mechanism. PIP4Ks interact with PIP5Ks and suppress PIP5K-mediated PtdIns(4,5)P2 synthesis and insulin-dependent conversion to PtdIns(3,4,5)P3. May be involved in thrombopoiesis, and the terminal maturation of megakaryocytes and regulation of their size. This chain is Phosphatidylinositol 5-phosphate 4-kinase type-2 alpha, found in Rattus norvegicus (Rat).